An 89-amino-acid chain; its full sequence is Small ribosomal subunit protein bS20 (89 aa).

It belongs to the bacterial ribosomal protein bS20 family.

Its function is as follows. Binds directly to 16S ribosomal RNA. In Phenylobacterium zucineum (strain HLK1), this protein is Small ribosomal subunit protein bS20.